Here is a 421-residue protein sequence, read N- to C-terminus: Imidazolonepropionase (421 aa).

The Fe(3+) site is built by His-81 and His-83. His-81 and His-83 together coordinate Zn(2+). Positions 90, 153, and 186 each coordinate 4-imidazolone-5-propanoate. Residue Tyr-153 coordinates N-formimidoyl-L-glutamate. Position 251 (His-251) interacts with Fe(3+). His-251 contributes to the Zn(2+) binding site. A 4-imidazolone-5-propanoate-binding site is contributed by Glu-254. Fe(3+) is bound at residue Asp-326. Asp-326 contacts Zn(2+). Asn-328 and Gly-330 together coordinate N-formimidoyl-L-glutamate. Ser-331 serves as a coordination point for 4-imidazolone-5-propanoate.

This sequence belongs to the metallo-dependent hydrolases superfamily. HutI family. Zn(2+) serves as cofactor. Fe(3+) is required as a cofactor.

It is found in the cytoplasm. It carries out the reaction 4-imidazolone-5-propanoate + H2O = N-formimidoyl-L-glutamate. Its pathway is amino-acid degradation; L-histidine degradation into L-glutamate; N-formimidoyl-L-glutamate from L-histidine: step 3/3. Functionally, catalyzes the hydrolytic cleavage of the carbon-nitrogen bond in imidazolone-5-propanoate to yield N-formimidoyl-L-glutamate. It is the third step in the universal histidine degradation pathway. This chain is Imidazolonepropionase, found in Streptococcus pyogenes serotype M4 (strain MGAS10750).